Consider the following 696-residue polypeptide: Lutropin-choriogonadotropic hormone receptor (696 aa).

A signal peptide spans 1 to 27; it reads MRRRSLALRLLLALLLLPPPLPQTLLG. Over 28 to 358 the chain is Extracellular; sequence APCPEPCSCR…AFNPCEDIMG (331 aa). N-linked (GlcNAc...) asparagine glycosylation occurs at Asn99. LRR repeat units lie at residues 122 to 147, 149 to 171, 172 to 196, 198 to 220, 221 to 244, and 250 to 271; these read LPRLKYLSICNTGIRKLPDVTKIFSS, FNFILEICDNLHITTVPANAFQG, MNNESITLKLYGNGFEEIQSHAFNG, TLISLELKENAHLKKMHNDAFRG, ARGPSILDISSTKLQALPSYGLES, and ATSSYSLKKLPSREKFTNLLDA. N-linked (GlcNAc...) asparagine glycans are attached at residues Asn174 and Asn195. N-linked (GlcNAc...) asparagine glycosylation is found at Asn291, Asn299, and Asn313. Tyr331 is subject to Sulfotyrosine. The helical transmembrane segment at 359–386 threads the bilayer; that stretch reads YDFLRVLIWLINILAIMGNVTVLFVLLT. Topologically, residues 387-395 are cytoplasmic; sequence SHYKLTVPR. Residues 396–418 form a helical membrane-spanning segment; sequence FLMCNLSFADFCMGLYLLLIASV. The Extracellular portion of the chain corresponds to 419–439; sequence DAQTKGQYYNHAIDWQTGNGC. Cys439 and Cys514 are disulfide-bonded. A helical membrane pass occupies residues 440 to 462; the sequence is SVAGFFTVFASELSVYTLTVITL. Over 463 to 482 the chain is Cytoplasmic; the sequence is ERWHTITYAIQLDQKLRLRH. The helical transmembrane segment at 483–505 threads the bilayer; that stretch reads AIPIMLGGWLFSTLIAMLPLVGV. The Extracellular segment spans residues 506 to 525; that stretch reads SSYMKVSICLPMDVETTLSQ. The chain crosses the membrane as a helical span at residues 526 to 547; the sequence is VYILTILILNVVAFIIICACYI. The Cytoplasmic segment spans residues 548 to 570; that stretch reads KIYFAVQNPELMATNKDTKIAKK. Residues 571–594 traverse the membrane as a helical segment; that stretch reads MAVLIFTDFTCMAPISFFAISAAL. Over 595–605 the chain is Extracellular; the sequence is KVPLITVTNSK. A helical membrane pass occupies residues 606-626; sequence VLLVLFYPVNSCANPFLYAIF. At 627 to 696 the chain is on the cytoplasmic side; the sequence is TKAFRRDFFL…VMDKTCYKDC (70 aa). S-palmitoyl cysteine attachment occurs at residues Cys643 and Cys644.

It belongs to the G-protein coupled receptor 1 family. FSH/LSH/TSH subfamily. In terms of processing, sulfated.

The protein localises to the cell membrane. In terms of biological role, receptor for lutropin-choriogonadotropic hormone. The activity of this receptor is mediated by G proteins which activate adenylate cyclase. This is Lutropin-choriogonadotropic hormone receptor (LHCGR) from Sus scrofa (Pig).